The sequence spans 228 residues: Heptaprenylglyceryl phosphate synthase (228 aa).

K12 provides a ligand contact to sn-glycerol 1-phosphate. Mg(2+) is bound by residues D14 and T40. Residues 159 to 164 (YLEYSG), G189, and 209 to 210 (GN) contribute to the sn-glycerol 1-phosphate site.

Belongs to the GGGP/HepGP synthase family. Group I subfamily. As to quaternary structure, homodimer. Mg(2+) serves as cofactor.

It carries out the reaction sn-glycerol 1-phosphate + all-trans-heptaprenyl diphosphate = 3-heptaprenyl-sn-glycero-1-phosphate + diphosphate. It functions in the pathway membrane lipid metabolism; glycerophospholipid metabolism. Its function is as follows. Prenyltransferase that catalyzes in vivo the transfer of the heptaprenyl moiety of heptaprenyl pyrophosphate (HepPP; 35 carbon atoms) to the C3 hydroxyl of sn-glycerol-1-phosphate (G1P), producing heptaprenylglyceryl phosphate (HepGP). This reaction is an ether-bond-formation step in the biosynthesis of archaea-type G1P-based membrane lipids found in Bacillales. The protein is Heptaprenylglyceryl phosphate synthase of Geobacillus sp. (strain WCH70).